The following is a 392-amino-acid chain: Formate-dependent phosphoribosylglycinamide formyltransferase (392 aa).

N(1)-(5-phospho-beta-D-ribosyl)glycinamide is bound by residues 22–23 and E82; that span reads EL. ATP contacts are provided by residues R114, K155, 160–165, 195–198, and E203; these read SSGKGQ and EGLV. The ATP-grasp domain maps to 119 to 308; sequence RLAAETLGVP…EFALHVRAFL (190 aa). Positions 267 and 279 each coordinate Mg(2+). N(1)-(5-phospho-beta-D-ribosyl)glycinamide is bound by residues D286, K355, and 362–363; that span reads RR.

The protein belongs to the PurK/PurT family. Homodimer.

The catalysed reaction is N(1)-(5-phospho-beta-D-ribosyl)glycinamide + formate + ATP = N(2)-formyl-N(1)-(5-phospho-beta-D-ribosyl)glycinamide + ADP + phosphate + H(+). It participates in purine metabolism; IMP biosynthesis via de novo pathway; N(2)-formyl-N(1)-(5-phospho-D-ribosyl)glycinamide from N(1)-(5-phospho-D-ribosyl)glycinamide (formate route): step 1/1. In terms of biological role, involved in the de novo purine biosynthesis. Catalyzes the transfer of formate to 5-phospho-ribosyl-glycinamide (GAR), producing 5-phospho-ribosyl-N-formylglycinamide (FGAR). Formate is provided by PurU via hydrolysis of 10-formyl-tetrahydrofolate. The protein is Formate-dependent phosphoribosylglycinamide formyltransferase of Pectobacterium carotovorum subsp. carotovorum (strain PC1).